The sequence spans 1328 residues: DNA-directed RNA polymerase subunit beta (1328 aa).

The protein belongs to the RNA polymerase beta chain family. As to quaternary structure, the RNAP catalytic core consists of 2 alpha, 1 beta, 1 beta' and 1 omega subunit. When a sigma factor is associated with the core the holoenzyme is formed, which can initiate transcription.

It catalyses the reaction RNA(n) + a ribonucleoside 5'-triphosphate = RNA(n+1) + diphosphate. In terms of biological role, DNA-dependent RNA polymerase catalyzes the transcription of DNA into RNA using the four ribonucleoside triphosphates as substrates. The protein is DNA-directed RNA polymerase subunit beta of Karelsulcia muelleri (strain GWSS) (Sulcia muelleri).